A 203-amino-acid polypeptide reads, in one-letter code: Large ribosomal subunit protein bL25 (203 aa).

This sequence belongs to the bacterial ribosomal protein bL25 family. CTC subfamily. In terms of assembly, part of the 50S ribosomal subunit; part of the 5S rRNA/L5/L18/L25 subcomplex. Contacts the 5S rRNA. Binds to the 5S rRNA independently of L5 and L18.

Its function is as follows. This is one of the proteins that binds to the 5S RNA in the ribosome where it forms part of the central protuberance. The protein is Large ribosomal subunit protein bL25 of Wolbachia pipientis subsp. Culex pipiens (strain wPip).